The following is a 454-amino-acid chain: Enolase (454 aa).

A (2R)-2-phosphoglycerate-binding site is contributed by Q167. Catalysis depends on E209, which acts as the Proton donor. 3 residues coordinate Mg(2+): D250, E312, and D339. Residues K364, R393, S394, and K415 each coordinate (2R)-2-phosphoglycerate. K364 functions as the Proton acceptor in the catalytic mechanism.

It belongs to the enolase family. Mg(2+) is required as a cofactor.

It localises to the cytoplasm. It is found in the secreted. The protein resides in the cell surface. It carries out the reaction (2R)-2-phosphoglycerate = phosphoenolpyruvate + H2O. Its pathway is carbohydrate degradation; glycolysis; pyruvate from D-glyceraldehyde 3-phosphate: step 4/5. Functionally, catalyzes the reversible conversion of 2-phosphoglycerate (2-PG) into phosphoenolpyruvate (PEP). It is essential for the degradation of carbohydrates via glycolysis. The polypeptide is Enolase (Mycoplasmopsis agalactiae (strain NCTC 10123 / CIP 59.7 / PG2) (Mycoplasma agalactiae)).